The following is a 316-amino-acid chain: Acetyl-coenzyme A carboxylase carboxyl transferase subunit beta, chloroplastic (316 aa).

The 270-residue stretch at 47–316 (LWTRCDNCEN…CKKFQNSFFK (270 aa)) folds into the CoA carboxyltransferase N-terminal domain. Zn(2+) is bound by residues cysteine 51, cysteine 54, cysteine 70, and cysteine 73. The C4-type zinc-finger motif lies at 51-73 (CDNCENMLYVRFLRQNKRICEEC).

This sequence belongs to the AccD/PCCB family. As to quaternary structure, acetyl-CoA carboxylase is a heterohexamer composed of biotin carboxyl carrier protein, biotin carboxylase and 2 subunits each of ACCase subunit alpha and ACCase plastid-coded subunit beta (accD). It depends on Zn(2+) as a cofactor.

The protein resides in the plastid. The protein localises to the chloroplast stroma. The catalysed reaction is N(6)-carboxybiotinyl-L-lysyl-[protein] + acetyl-CoA = N(6)-biotinyl-L-lysyl-[protein] + malonyl-CoA. The protein operates within lipid metabolism; malonyl-CoA biosynthesis; malonyl-CoA from acetyl-CoA: step 1/1. Functionally, component of the acetyl coenzyme A carboxylase (ACC) complex. Biotin carboxylase (BC) catalyzes the carboxylation of biotin on its carrier protein (BCCP) and then the CO(2) group is transferred by the transcarboxylase to acetyl-CoA to form malonyl-CoA. The protein is Acetyl-coenzyme A carboxylase carboxyl transferase subunit beta, chloroplastic of Marchantia polymorpha (Common liverwort).